Consider the following 578-residue polypeptide: Vi polysaccharide biosynthesis protein VipC/TviE (578 aa).

It participates in glycan metabolism; Vi-antigen biosynthesis. It functions in the pathway capsule biogenesis; capsule polysaccharide biosynthesis. This chain is Vi polysaccharide biosynthesis protein VipC/TviE (vipC), found in Salmonella typhi.